The sequence spans 167 residues: NADH-ubiquinone oxidoreductase chain 6 (167 aa).

The next 4 helical transmembrane spans lie at 21 to 41 (SPYY…LLLL), 45 to 65 (IIFP…VVFI), 78 to 98 (PINL…ITMI), and 132 to 152 (SMFI…LEVV).

This sequence belongs to the complex I subunit 6 family.

It is found in the mitochondrion membrane. The catalysed reaction is a ubiquinone + NADH + 5 H(+)(in) = a ubiquinol + NAD(+) + 4 H(+)(out). In terms of biological role, core subunit of the mitochondrial membrane respiratory chain NADH dehydrogenase (Complex I) that is believed to belong to the minimal assembly required for catalysis. Complex I functions in the transfer of electrons from NADH to the respiratory chain. The immediate electron acceptor for the enzyme is believed to be ubiquinone. In Branchiostoma floridae (Florida lancelet), this protein is NADH-ubiquinone oxidoreductase chain 6 (ND6).